The primary structure comprises 94 residues: uncharacterized protein (94 aa).

This is an uncharacterized protein from Archaeoglobus fulgidus (strain ATCC 49558 / DSM 4304 / JCM 9628 / NBRC 100126 / VC-16).